A 140-amino-acid polypeptide reads, in one-letter code: Holo-[acyl-carrier-protein] synthase (140 aa).

Residues Asp-8 and Glu-62 each contribute to the Mg(2+) site.

The protein belongs to the P-Pant transferase superfamily. AcpS family. Requires Mg(2+) as cofactor.

It is found in the cytoplasm. The catalysed reaction is apo-[ACP] + CoA = holo-[ACP] + adenosine 3',5'-bisphosphate + H(+). Transfers the 4'-phosphopantetheine moiety from coenzyme A to a Ser of acyl-carrier-protein. The sequence is that of Holo-[acyl-carrier-protein] synthase from Cupriavidus necator (strain ATCC 17699 / DSM 428 / KCTC 22496 / NCIMB 10442 / H16 / Stanier 337) (Ralstonia eutropha).